The chain runs to 92 residues: Small ribosomal subunit protein uS19 (92 aa).

Belongs to the universal ribosomal protein uS19 family.

In terms of biological role, protein S19 forms a complex with S13 that binds strongly to the 16S ribosomal RNA. This chain is Small ribosomal subunit protein uS19, found in Beijerinckia indica subsp. indica (strain ATCC 9039 / DSM 1715 / NCIMB 8712).